Consider the following 166-residue polypeptide: Lipoprotein signal peptidase (166 aa).

The next 4 helical transmembrane spans lie at Ala9–Leu29, Ala45–Leu65, Trp71–Leu91, and Phe100–Val120. Catalysis depends on residues Asp126 and Asp144. A helical transmembrane segment spans residues Trp135–Val155.

It belongs to the peptidase A8 family.

The protein localises to the cell inner membrane. It carries out the reaction Release of signal peptides from bacterial membrane prolipoproteins. Hydrolyzes -Xaa-Yaa-Zaa-|-(S,diacylglyceryl)Cys-, in which Xaa is hydrophobic (preferably Leu), and Yaa (Ala or Ser) and Zaa (Gly or Ala) have small, neutral side chains.. Its pathway is protein modification; lipoprotein biosynthesis (signal peptide cleavage). This protein specifically catalyzes the removal of signal peptides from prolipoproteins. The chain is Lipoprotein signal peptidase from Burkholderia ambifaria (strain MC40-6).